The sequence spans 131 residues: Peptide methionine sulfoxide reductase MsrB (131 aa).

The MsrB domain maps to 9–131; the sequence is DEDWKKELTP…NSASLKFQKE (123 aa). Zn(2+) is bound by residues Cys-48, Cys-51, Cys-97, and Cys-100. The active-site Nucleophile is the Cys-120.

This sequence belongs to the MsrB Met sulfoxide reductase family. Zn(2+) serves as cofactor.

It carries out the reaction L-methionyl-[protein] + [thioredoxin]-disulfide + H2O = L-methionyl-(R)-S-oxide-[protein] + [thioredoxin]-dithiol. The protein is Peptide methionine sulfoxide reductase MsrB of Leptospira interrogans serogroup Icterohaemorrhagiae serovar Lai (strain 56601).